A 406-amino-acid polypeptide reads, in one-letter code: Argininosuccinate synthase (406 aa).

8-16 (AYSGGLDTT) is an ATP binding site. L-citrulline is bound by residues tyrosine 86 and serine 91. Position 116 (glycine 116) interacts with ATP. Residues threonine 118, asparagine 122, and aspartate 123 each contribute to the L-aspartate site. Position 122 (asparagine 122) interacts with L-citrulline. 5 residues coordinate L-citrulline: arginine 126, serine 175, serine 184, glutamate 261, and tyrosine 273.

Belongs to the argininosuccinate synthase family. Type 1 subfamily. Homotetramer.

It is found in the cytoplasm. It carries out the reaction L-citrulline + L-aspartate + ATP = 2-(N(omega)-L-arginino)succinate + AMP + diphosphate + H(+). It participates in amino-acid biosynthesis; L-arginine biosynthesis; L-arginine from L-ornithine and carbamoyl phosphate: step 2/3. This Brachyspira hyodysenteriae (strain ATCC 49526 / WA1) protein is Argininosuccinate synthase.